The sequence spans 617 residues: Sodium-coupled monocarboxylate transporter 2 (617 aa).

At 1 to 5 (MEVKN) the chain is on the extracellular side. Residues 6-26 (FAVWDYVVFAALFIISSGIGV) traverse the membrane as a helical segment. The Cytoplasmic portion of the chain corresponds to 27 to 47 (FYAIKERKKATSREFLVGGRQ). The helical transmembrane segment at 48–68 (MSFGPVALSLTASFMSAVTVL) threads the bilayer. Over 69–80 (GTPADVYRFGAS) the chain is Extracellular. The chain crosses the membrane as a helical span at residues 81–101 (FVLFFITYGLVIILTSELFLP). At 102 to 128 (VFYRSGITSTYEYLQLRFNKPVRYAAT) the chain is on the cytoplasmic side. The chain crosses the membrane as a helical span at residues 129–149 (VIYIVQTILYTGVVVYAPALA). Residues 150-157 (LNQVTGFD) are Extracellular-facing. A helical transmembrane segment spans residues 158–178 (LWGSVFATGIVCTFYCTLGGL). Residues 179 to 180 (KA) lie on the Cytoplasmic side of the membrane. The chain crosses the membrane as a helical span at residues 181–201 (VVWTDAFQMVVMIVGFLTVLI). Topologically, residues 202–235 (QGSTYAGGLHNVLEQAENGSRLNIFDFDIDPLRR) are extracellular. N219 is a glycosylation site (N-linked (GlcNAc...) asparagine). A helical transmembrane segment spans residues 236-256 (HTFWTISVGGTFTWLGIYGVN). Residues 257–273 (QSTIQRCISCKTEKHAK) are Cytoplasmic-facing. A helical transmembrane segment spans residues 274–294 (LALYFNLLGLWIILLCAVFSG). The Extracellular segment spans residues 295 to 334 (LTMYAHFKDCDPWTSGIISAPDQLMPYFVMELFSTMPGLP). A helical transmembrane segment spans residues 335–357 (GLFVACAFSGTLSTVAASINALA). The Cytoplasmic segment spans residues 358–385 (TVTFEDFVKSCFPRLSDKLSTWISKGLC). The chain crosses the membrane as a helical span at residues 386-406 (LLFGVICTSTAVAASLMGGVI). Topologically, residues 407 to 411 (QAALS) are extracellular. Residues 412–432 (IHGMCGGPMLGLFSLGILFPF) form a helical membrane-spanning segment. Over 433 to 437 (VNWKG) the chain is Cytoplasmic. A helical membrane pass occupies residues 438–458 (ALAGLLTGILLSFWVAIGAFI). The Extracellular portion of the chain corresponds to 459–507 (YPAPASKTWPLPLSTDQCGLSNVTESVPPVLSSRPAIAETWYALSYLHY). An N-linked (GlcNAc...) asparagine glycan is attached at N480. Residues 508–528 (STVGCLGCIAAGVIISFLTGL) form a helical membrane-spanning segment. Residues 529-617 (QKGKDIPPLL…NMALEKITHF (89 aa)) are Cytoplasmic-facing.

The protein belongs to the sodium:solute symporter (SSF) (TC 2.A.21) family.

Its subcellular location is the apical cell membrane. It catalyses the reaction (S)-lactate(out) + Na(+)(out) = (S)-lactate(in) + Na(+)(in). It carries out the reaction nicotinate(out) + Na(+)(out) = nicotinate(in) + Na(+)(in). The enzyme catalyses pyruvate(out) + Na(+)(out) = pyruvate(in) + Na(+)(in). The catalysed reaction is propanoate(out) + Na(+)(out) = propanoate(in) + Na(+)(in). It catalyses the reaction butanoate(out) + Na(+)(out) = butanoate(in) + Na(+)(in). It carries out the reaction acetoacetate(out) + Na(+)(out) = acetoacetate(in) + Na(+)(in). Its function is as follows. Acts as an electroneutral and low-affinity sodium (Na(+))-dependent sodium-coupled solute transporter. Catalyzes the transport across the plasma membrane of many monocarboxylates such as lactate, pyruvate, nicotinate, propionate, butyrate and beta-D-hydroxybutyrate. May be responsible for the first step of reabsorption of monocarboxylates from the lumen of the proximal tubule of the kidney and the small intestine. May play also a role in monocarboxylates transport in the retina. Mediates electroneutral uptake of lactate, with a stoichiometry of 2 Na(+) for each lactate. This is Sodium-coupled monocarboxylate transporter 2 (SLC5A12) from Bos taurus (Bovine).